We begin with the raw amino-acid sequence, 331 residues long: UPF0329 protein ECU01_0080/ECU01_1530/ECU02_1560/ECU04_0090/ECU08_0010/ECU08_2090 (331 aa).

Residues 305–320 (QRSEMEKRDREQDPER) show a composition bias toward basic and acidic residues. The interval 305–331 (QRSEMEKRDREQDPERRRLRARRVGSL) is disordered. Basic residues predominate over residues 321-331 (RRLRARRVGSL).

It belongs to the UPF0329 family.

The chain is UPF0329 protein ECU01_0080/ECU01_1530/ECU02_1560/ECU04_0090/ECU08_0010/ECU08_2090 from Encephalitozoon cuniculi (strain GB-M1) (Microsporidian parasite).